Reading from the N-terminus, the 356-residue chain is PEP-dependent dihydroxyacetone kinase, dihydroxyacetone-binding subunit DhaK (356 aa).

In terms of domain architecture, DhaK spans 7–352; sequence DVQDVLDEQL…WDAPVHTPAL (346 aa). Dihydroxyacetone contacts are provided by residues 53-56, Lys104, and Asp109; that span reads GSGH. His56 serves as the catalytic Proton acceptor. His218 acts as the Tele-hemiaminal-histidine intermediate in catalysis.

In terms of assembly, homodimer. The dihydroxyacetone kinase complex is composed of a homodimer of DhaM, a homodimer of DhaK and the subunit DhaL. DhaL also forms a complex with DhaR.

The catalysed reaction is dihydroxyacetone + phosphoenolpyruvate = dihydroxyacetone phosphate + pyruvate. The protein operates within polyol metabolism; glycerol degradation. With respect to regulation, inhibited by chloro-3-hydroxyacetone and D,L-glyceraldehyde. Its function is as follows. Dihydroxyacetone binding subunit of the dihydroxyacetone kinase, which is responsible for the phosphoenolpyruvate (PEP)-dependent phosphorylation of dihydroxyacetone via a phosphoryl group transfer from DhaL-ATP. Binds covalently dihydroxyacetone in hemiaminal linkage. DhaK also acts as corepressor of the transcription activator DhaR by binding to the sensor domain of DhaR. In the presence of dihydroxyacetone, DhaL-ADP displaces DhaK and stimulates DhaR activity. In the absence of dihydroxyacetone, DhaL-ADP is converted by the PTS to DhaL-ATP, which does not bind to DhaR. In Escherichia coli (strain K12), this protein is PEP-dependent dihydroxyacetone kinase, dihydroxyacetone-binding subunit DhaK.